The following is a 266-amino-acid chain: Large ribosomal subunit protein eL8 (266 aa).

Glycyl lysine isopeptide (Lys-Gly) (interchain with G-Cter in SUMO2) cross-links involve residues Lys11, Lys20, and Lys21. Lys34 is subject to N6-acetyllysine. Lys48 is covalently cross-linked (Glycyl lysine isopeptide (Lys-Gly) (interchain with G-Cter in SUMO2)). Lys97 is subject to N6-acetyllysine; alternate. A Glycyl lysine isopeptide (Lys-Gly) (interchain with G-Cter in SUMO2); alternate cross-link involves residue Lys97. Residue Lys125 forms a Glycyl lysine isopeptide (Lys-Gly) (interchain with G-Cter in SUMO2) linkage. Residue Lys217 is modified to N6-acetyllysine. Lys245 participates in a covalent cross-link: Glycyl lysine isopeptide (Lys-Gly) (interchain with G-Cter in SUMO2).

This sequence belongs to the eukaryotic ribosomal protein eL8 family. As to quaternary structure, component of the large ribosomal subunit. Interacts with CRY1. Interacts with DICER1, AGO2, TARBP2, MOV10 and EIF6; they form a large RNA-induced silencing complex (RISC).

The protein resides in the cytoplasm. Functionally, component of the large ribosomal subunit. The ribosome is a large ribonucleoprotein complex responsible for the synthesis of proteins in the cell. This is Large ribosomal subunit protein eL8 (Rpl7a) from Mus musculus (Mouse).